Consider the following 264-residue polypeptide: Thiazole synthase (264 aa).

K98 acts as the Schiff-base intermediate with DXP in catalysis. 1-deoxy-D-xylulose 5-phosphate-binding positions include G159, 185–186 (AG), and 207–208 (AS). The tract at residues 243–264 (HFAEASSPPEGRAHLDPERPAF) is disordered. The segment covering 253 to 264 (GRAHLDPERPAF) has biased composition (basic and acidic residues).

Belongs to the ThiG family. As to quaternary structure, homotetramer. Forms heterodimers with either ThiH or ThiS.

The protein localises to the cytoplasm. It catalyses the reaction [ThiS sulfur-carrier protein]-C-terminal-Gly-aminoethanethioate + 2-iminoacetate + 1-deoxy-D-xylulose 5-phosphate = [ThiS sulfur-carrier protein]-C-terminal Gly-Gly + 2-[(2R,5Z)-2-carboxy-4-methylthiazol-5(2H)-ylidene]ethyl phosphate + 2 H2O + H(+). The protein operates within cofactor biosynthesis; thiamine diphosphate biosynthesis. Its function is as follows. Catalyzes the rearrangement of 1-deoxy-D-xylulose 5-phosphate (DXP) to produce the thiazole phosphate moiety of thiamine. Sulfur is provided by the thiocarboxylate moiety of the carrier protein ThiS. In vitro, sulfur can be provided by H(2)S. The chain is Thiazole synthase from Streptomyces avermitilis (strain ATCC 31267 / DSM 46492 / JCM 5070 / NBRC 14893 / NCIMB 12804 / NRRL 8165 / MA-4680).